Here is a 347-residue protein sequence, read N- to C-terminus: UDP-3-O-acylglucosamine N-acyltransferase 1 (347 aa).

Catalysis depends on His-246, which acts as the Proton acceptor.

This sequence belongs to the transferase hexapeptide repeat family. LpxD subfamily. As to quaternary structure, homotrimer.

It carries out the reaction a UDP-3-O-[(3R)-3-hydroxyacyl]-alpha-D-glucosamine + a (3R)-hydroxyacyl-[ACP] = a UDP-2-N,3-O-bis[(3R)-3-hydroxyacyl]-alpha-D-glucosamine + holo-[ACP] + H(+). It participates in bacterial outer membrane biogenesis; LPS lipid A biosynthesis. Catalyzes the N-acylation of UDP-3-O-acylglucosamine using 3-hydroxyacyl-ACP as the acyl donor. Is involved in the biosynthesis of lipid A, a phosphorylated glycolipid that anchors the lipopolysaccharide to the outer membrane of the cell. The protein is UDP-3-O-acylglucosamine N-acyltransferase 1 of Francisella tularensis subsp. holarctica (strain LVS).